The following is a 305-amino-acid chain: tRNA pseudouridine synthase B (305 aa).

Asp39 serves as the catalytic Nucleophile.

Belongs to the pseudouridine synthase TruB family. Type 1 subfamily.

The catalysed reaction is uridine(55) in tRNA = pseudouridine(55) in tRNA. Responsible for synthesis of pseudouridine from uracil-55 in the psi GC loop of transfer RNAs. The protein is tRNA pseudouridine synthase B of Staphylococcus epidermidis (strain ATCC 35984 / DSM 28319 / BCRC 17069 / CCUG 31568 / BM 3577 / RP62A).